The following is a 229-amino-acid chain: MAKLTKKQKEAVSKIEKNKLYSLKDASVLIKQIASAKFDESVDIAVKLGVDPRKANQMVRGVVALPHGTGKNMRVLALVTPDKEAEAKEAGADFVGLDDYLQKIKDGWTDVDVIVTMPAVMGKLGPLGRILGPRGLMPNPKTGTVTMEIGKAVTEIKAGKIDFKVDKTGIVHAGIGRISFDADKIMENAHEIIQTLIKLKPTAAKGTYIKSIHLTSTMSPAIALDPKAV.

It belongs to the universal ribosomal protein uL1 family. In terms of assembly, part of the 50S ribosomal subunit.

In terms of biological role, binds directly to 23S rRNA. The L1 stalk is quite mobile in the ribosome, and is involved in E site tRNA release. Its function is as follows. Protein L1 is also a translational repressor protein, it controls the translation of the L11 operon by binding to its mRNA. The chain is Large ribosomal subunit protein uL1 from Flavobacterium psychrophilum (strain ATCC 49511 / DSM 21280 / CIP 103535 / JIP02/86).